The sequence spans 305 residues: Probable 5-dehydro-4-deoxyglucarate dehydratase (305 aa).

It belongs to the DapA family.

The enzyme catalyses 5-dehydro-4-deoxy-D-glucarate + H(+) = 2,5-dioxopentanoate + CO2 + H2O. The protein operates within carbohydrate acid metabolism; D-glucarate degradation; 2,5-dioxopentanoate from D-glucarate: step 2/2. The chain is Probable 5-dehydro-4-deoxyglucarate dehydratase from Pseudomonas entomophila (strain L48).